Reading from the N-terminus, the 177-residue chain is Large ribosomal subunit protein uL6 (177 aa).

The protein belongs to the universal ribosomal protein uL6 family. As to quaternary structure, part of the 50S ribosomal subunit.

Its function is as follows. This protein binds to the 23S rRNA, and is important in its secondary structure. It is located near the subunit interface in the base of the L7/L12 stalk, and near the tRNA binding site of the peptidyltransferase center. The polypeptide is Large ribosomal subunit protein uL6 (Rhizobium etli (strain CIAT 652)).